A 1097-amino-acid chain; its full sequence is DNA-directed RNA polymerase subunit beta (1097 aa).

The interval 1072 to 1097 is disordered; sequence QDINPRRNTPSRPTYESLGTSEYEED. Polar residues predominate over residues 1077 to 1091; the sequence is RRNTPSRPTYESLGT.

It belongs to the RNA polymerase beta chain family. In cyanobacteria the RNAP catalytic core is composed of 2 alpha, 1 beta, 1 beta', 1 gamma and 1 omega subunit. When a sigma factor is associated with the core the holoenzyme is formed, which can initiate transcription.

The catalysed reaction is RNA(n) + a ribonucleoside 5'-triphosphate = RNA(n+1) + diphosphate. DNA-dependent RNA polymerase catalyzes the transcription of DNA into RNA using the four ribonucleoside triphosphates as substrates. This Prochlorococcus marinus (strain MIT 9215) protein is DNA-directed RNA polymerase subunit beta.